The following is a 1184-amino-acid chain: MEGKATELLAVLKNNNLAIDVKVSHLLSIKSDIKQKNVPDNAVHLIFESLRLAITSHHAALYAAGFSTFGHFLKRLFIQDQAHIVSAYARHFCPVLLERLGDHKERVRAQAAQIFTDLWPAASADVEHYVLEVALTGKNPKAKETSLIWLSNMSRNHGLLFRSYVPSVVSCLEDADSFVRHTAKSTVVELFQGAPARAKADLTKEMTAQNVRQSIVNAVYANIGLEDHSSTARPRSRVEPRYTPCTDSHPLRSASRAEVVHQQPAAVVSSAPLRPSKEATPMVEPEPIKSRPGSSKSDKGRTIAAAPEAEKAPHMETARPSSQDGEAPQPLHAETSKQVEDLFRVLSPAFEGRESEDNWRHREKYITSLRRLTYGNAPHDFPQPFFTGIKTNLDGIFKAVNSLRTTLSTNGCLLIQDLAKIGGSRIDPMVEVIMQNLIKLCGGMKKISAQNGNVSVNDVLANVTYTPRLLQHVTSACQDKNAQLRLFAAGWLKTLLNKQSHHKSSLEHGGGLALLEKSLKRGLTDANPGIREAMRGAFWTFHQMWPARGNNILSDLDNKTRHLLEKDPANPNRDQSSYLSSDTLTVPSRSALKEAIAAHKKARLAPAKTLPPRPESAQSSFSETKVSDPPAKSTGRTARAPLSSLSSAPMRPGAKPRRPELARPATADPYSSRKTAATDAVHIDSSPRPRRVANLGQAPSSTKSKPKKLDIPMTMAVDPVAPSASNENETQVATQVASKVRKRSSLSEQFAAIKRDDRDINALSELSINKTEHPHEIAVGESSNNEAGRHDDHAPCEISFDKLDRHDENKLSESPTPGPDHHDENALGELSINVPDRRDETALGELSINKPQRRDENALGELSINKLDRRDENTPSKSPPSEQDRRVEKTIDSAEHTSQAQRRVEESEPYFARFKIRSRLSNKRRNISPHSEHLENAKEMVRVAGQRIRSRSFDLFAYRKLQDLIHYHGEKLFTRPVFDDLLDGLLVELRKEPSPDRKHNGDYADVKTQVVGTLRLLEKSCPNLFVIDYDAIDAIFHARRYFETNSWIVQELQQTALEWFRNCEPSKLEGMLDTLVQYVQRETRDEPGYRSILMALSLLTDLIGDANKKGAWFSNEILEQVGTIAARDILAEDTDIRKKSIELCVQLYVMSTNLYQDKGVSFWRLVKAPEGGTRQLIMYYIARQ.

HEAT repeat units lie at residues 92–130 (FCPV…EHYV) and 162–194 (RSYV…FQGA). Basic and acidic residues-rich tracts occupy residues 229–240 (SSTARPRSRVEP) and 308–317 (EAEKAPHMET). The segment at 229–336 (SSTARPRSRV…APQPLHAETS (108 aa)) is disordered. The HEAT 3 repeat unit spans residues 463-499 (VTYTPRLLQHVTSACQDKNAQLRLFAAGWLKTLLNKQ). Disordered stretches follow at residues 564–584 (LEKD…SDTL) and 602–906 (ARLA…RVEE). The segment covering 572-584 (NRDQSSYLSSDTL) has biased composition (polar residues). Positions 640 to 649 (APLSSLSSAP) are enriched in low complexity. A compositionally biased stretch (polar residues) spans 723–737 (SASNENETQVATQVA). 2 stretches are compositionally biased toward basic and acidic residues: residues 787-811 (AGRH…ENKL) and 882-895 (EQDR…DSAE).

Belongs to the CLASP family. In terms of assembly, interacts with microtubules.

The protein localises to the cytoplasm. It localises to the cytoskeleton. The protein resides in the nucleus. Its subcellular location is the spindle. Its function is as follows. Microtubule binding protein that promotes the stabilization of dynamic microtubules. Required for mitotic spindle formation. This Aspergillus oryzae (strain ATCC 42149 / RIB 40) (Yellow koji mold) protein is Protein stu1 (stu1).